The following is a 333-amino-acid chain: Transaldolase NQM1 (333 aa).

The Schiff-base intermediate with substrate role is filled by K144.

The protein belongs to the transaldolase family. Type 1 subfamily. Homodimer.

It carries out the reaction D-sedoheptulose 7-phosphate + D-glyceraldehyde 3-phosphate = D-erythrose 4-phosphate + beta-D-fructose 6-phosphate. Its pathway is carbohydrate degradation; pentose phosphate pathway; D-glyceraldehyde 3-phosphate and beta-D-fructose 6-phosphate from D-ribose 5-phosphate and D-xylulose 5-phosphate (non-oxidative stage): step 2/3. Functionally, transaldolase is important for the balance of metabolites in the pentose-phosphate pathway. In Saccharomyces cerevisiae (strain ATCC 204508 / S288c) (Baker's yeast), this protein is Transaldolase NQM1 (NQM1).